We begin with the raw amino-acid sequence, 424 residues long: Glutamyl-tRNA reductase (424 aa).

Substrate contacts are provided by residues 51-54 (TCNR), serine 99, 104-106 (EDQ), and glutamine 110. Cysteine 52 (nucleophile) is an active-site residue. Position 179–184 (179–184 (GTGEMG)) interacts with NADP(+).

This sequence belongs to the glutamyl-tRNA reductase family. Homodimer.

The catalysed reaction is (S)-4-amino-5-oxopentanoate + tRNA(Glu) + NADP(+) = L-glutamyl-tRNA(Glu) + NADPH + H(+). The protein operates within porphyrin-containing compound metabolism; protoporphyrin-IX biosynthesis; 5-aminolevulinate from L-glutamyl-tRNA(Glu): step 1/2. Functionally, catalyzes the NADPH-dependent reduction of glutamyl-tRNA(Glu) to glutamate 1-semialdehyde (GSA). This is Glutamyl-tRNA reductase from Methanospirillum hungatei JF-1 (strain ATCC 27890 / DSM 864 / NBRC 100397 / JF-1).